Here is a 421-residue protein sequence, read N- to C-terminus: Gamma-glutamyl phosphate reductase (421 aa).

It belongs to the gamma-glutamyl phosphate reductase family.

Its subcellular location is the cytoplasm. The catalysed reaction is L-glutamate 5-semialdehyde + phosphate + NADP(+) = L-glutamyl 5-phosphate + NADPH + H(+). Its pathway is amino-acid biosynthesis; L-proline biosynthesis; L-glutamate 5-semialdehyde from L-glutamate: step 2/2. In terms of biological role, catalyzes the NADPH-dependent reduction of L-glutamate 5-phosphate into L-glutamate 5-semialdehyde and phosphate. The product spontaneously undergoes cyclization to form 1-pyrroline-5-carboxylate. In Brucella abortus (strain 2308), this protein is Gamma-glutamyl phosphate reductase.